The primary structure comprises 317 residues: Melanocyte-stimulating hormone receptor (317 aa).

At 1 to 37 the chain is on the extracellular side; that stretch reads MPMQGAQRRLLGSLNSTPTATPNLGLAANHTGAPCLE. Asn-29 is a glycosylation site (N-linked (GlcNAc...) asparagine). Residues 38–63 form a helical membrane-spanning segment; the sequence is VSIPDGLFLSLGLVSLVENVLVVAAI. The Cytoplasmic segment spans residues 64–72; the sequence is AKNRNLHSP. The helical transmembrane segment at 73-93 threads the bilayer; the sequence is MYCFICCLALSDLLVSGSNML. The Extracellular segment spans residues 94–118; sequence EMAVILLLEAGALATRASVVQQLQN. The helical transmembrane segment at 119 to 140 threads the bilayer; the sequence is TIDVLTCSSMLCSLCFLGAIAV. At 141 to 163 the chain is on the cytoplasmic side; that stretch reads DRYVSIFYALRYHSIVTLPRARR. Residues 164 to 183 form a helical membrane-spanning segment; it reads AIAAIWVASVLSSTLFIAYC. Residues 184–191 lie on the Extracellular side of the membrane; sequence DHAAVLLC. Residues 192–211 form a helical membrane-spanning segment; it reads LVVFFLAMLVLMAVLYVHML. Residues 212–240 lie on the Cytoplasmic side of the membrane; it reads ARACQHAQGITRLHKRQLPAHQGFGLRGA. Residues 241–266 traverse the membrane as a helical segment; that stretch reads ATLTILLGIFFLCWGPFFLHLMLVVL. Residues 267 to 279 are Extracellular-facing; it reads CPQHLTCSCIFKN. Residues 280–300 traverse the membrane as a helical segment; the sequence is FKVFLTLIICNTIIDPLIYAF. Residues 301–317 lie on the Cytoplasmic side of the membrane; sequence RSQELCRTLREVLLCSW. The S-palmitoyl cysteine moiety is linked to residue Cys-315.

Belongs to the G-protein coupled receptor 1 family. Interacts with MGRN1, but does not undergo MGRN1-mediated ubiquitination; this interaction competes with GNAS-binding and thus inhibits agonist-induced cAMP production. Interacts with OPN3; the interaction results in a decrease in MC1R-mediated cAMP signaling and ultimately a decrease in melanin production in melanocytes.

It is found in the cell membrane. Receptor for MSH (alpha, beta and gamma) and ACTH. The activity of this receptor is mediated by G proteins which activate adenylate cyclase. Mediates melanogenesis, the production of eumelanin (black/brown) and phaeomelanin (red/yellow), via regulation of cAMP signaling in melanocytes. The chain is Melanocyte-stimulating hormone receptor (MC1R) from Alouatta pigra (Guatemalan howler monkey).